Here is a 1378-residue protein sequence, read N- to C-terminus: S-cell enriched with leucine-rich repeat-containing protein slrA (1378 aa).

Residues 17–37 (IFKILYCYLFTSLLLILSTWV) form a helical membrane-spanning segment. 5 N-linked (GlcNAc...) asparagine glycosylation sites follow: N59, N112, N143, N172, and N201. 9 LRR repeats span residues 143 to 165 (NLTG…LPYL), 167 to 188 (HLRN…GLLK), 191 to 212 (SLVA…ADSK), 213 to 235 (AISY…WKTP), 236 to 257 (NLLF…EFFR), 260 to 281 (SLDY…LSKS), 282 to 304 (RISY…TCWK), 307 to 329 (SLRI…IFDH), and 331 to 353 (PLQY…LDCA). N-linked (GlcNAc...) asparagine glycosylation is found at N265, N287, and N296. N416, N436, N451, N491, N513, N596, N605, N634, N704, N710, N740, N741, N771, N788, N801, N826, N843, N861, N875, and N907 each carry an N-linked (GlcNAc...) asparagine glycan. Residues 886–946 (SLNNNNNNNN…NNNENNNENK (61 aa)) adopt a coiled-coil conformation. The span at 891–909 (NNNNNNNNNKNNNNNNNDS) shows a compositional bias: low complexity. Residues 891–945 (NNNNNNNNNKNNNNNNNDSNNEKEVVEDEEEDLDYSSQNDNNNINNNNNENNNEN) are disordered. The span at 915–924 (VVEDEEEDLD) shows a compositional bias: acidic residues. A compositionally biased stretch (low complexity) spans 929 to 945 (NDNNNINNNNNENNNEN). N953, N970, N1090, and N1100 each carry an N-linked (GlcNAc...) asparagine glycan. A helical membrane pass occupies residues 1160–1180 (YYIVFFGCASGLILVLVICIV). Over residues 1227–1276 (DLNNNNNNNNNNNNNNNNNNNNNNNNNNNNNNNNNFNDGSDTFNNNNKKN) the composition is skewed to low complexity. The segment at 1227 to 1378 (DLNNNNNNNN…KKHLTIINKK (152 aa)) is disordered. The span at 1289-1304 (DGKENDIKNINNKKDE) shows a compositional bias: basic and acidic residues. Residues 1305-1324 (KEDDGDDDDDEDDDEYEDDT) show a composition bias toward acidic residues. Residues 1328 to 1353 (SSGNSSRSKGSDGGSSSNSLSSDKQS) are compositionally biased toward low complexity. N-linked (GlcNAc...) asparagine glycans are attached at residues N1331 and N1360. Over residues 1354–1364 (FNNGNENNSII) the composition is skewed to polar residues. Over residues 1368–1378 (KKKHLTIINKK) the composition is skewed to basic residues.

It is found in the membrane. This Dictyostelium discoideum (Social amoeba) protein is S-cell enriched with leucine-rich repeat-containing protein slrA (slrA).